Reading from the N-terminus, the 156-residue chain is Ribosome maturation factor RimP (156 aa).

Belongs to the RimP family.

The protein resides in the cytoplasm. Its function is as follows. Required for maturation of 30S ribosomal subunits. This Halalkalibacterium halodurans (strain ATCC BAA-125 / DSM 18197 / FERM 7344 / JCM 9153 / C-125) (Bacillus halodurans) protein is Ribosome maturation factor RimP.